Reading from the N-terminus, the 315-residue chain is Cyclin-dependent kinase B2-2 (315 aa).

A Protein kinase domain is found at Phe16–Phe306. ATP-binding positions include Val22–Val30 and Lys45. Tyr27 is modified (phosphotyrosine). The active-site Proton acceptor is Asp147. Position 181 is a phosphothreonine (Thr181).

Belongs to the protein kinase superfamily. CMGC Ser/Thr protein kinase family. CDC2/CDKX subfamily. Expressed in flowers.

It carries out the reaction L-seryl-[protein] + ATP = O-phospho-L-seryl-[protein] + ADP + H(+). The enzyme catalyses L-threonyl-[protein] + ATP = O-phospho-L-threonyl-[protein] + ADP + H(+). It catalyses the reaction [DNA-directed RNA polymerase] + ATP = phospho-[DNA-directed RNA polymerase] + ADP + H(+). The chain is Cyclin-dependent kinase B2-2 (CDKB2-2) from Arabidopsis thaliana (Mouse-ear cress).